We begin with the raw amino-acid sequence, 776 residues long: Calcium-independent phospholipase A2-gamma (776 aa).

Composition is skewed to basic and acidic residues over residues R226–K238 and L307–D331. Disordered stretches follow at residues R226–P274 and K306–D331. The PNPLA domain occupies L439–L634. The short motif at G443–G448 is the GXGXXG element. The helical transmembrane segment at L469–F489 threads the bilayer. The GXSXG signature appears at G475–G479. S477 serves as the catalytic Nucleophile. D621 serves as the catalytic Proton acceptor. The DGA/G signature appears at D621–G623. K730 is modified (N6-succinyllysine).

It is found in the endoplasmic reticulum membrane. Its subcellular location is the microsome membrane. The protein resides in the mitochondrion membrane. It localises to the peroxisome membrane. It carries out the reaction a 1,2-diacyl-sn-glycero-3-phosphocholine + H2O = a 1-acyl-sn-glycero-3-phosphocholine + a fatty acid + H(+). The catalysed reaction is a 1,2-diacyl-sn-glycero-3-phosphocholine + H2O = a 2-acyl-sn-glycero-3-phosphocholine + a fatty acid + H(+). It catalyses the reaction a 1,2-diacyl-sn-glycero-3-phosphoethanolamine + H2O = a 1-acyl-sn-glycero-3-phosphoethanolamine + a fatty acid + H(+). The enzyme catalyses a 1-O-(1Z-alkenyl)-2-acyl-sn-glycero-3-phosphocholine + H2O = a 1-O-(1Z-alkenyl)-sn-glycero-3-phosphocholine + a fatty acid + H(+). It carries out the reaction a 1-acyl-sn-glycero-3-phosphocholine + H2O = sn-glycerol 3-phosphocholine + a fatty acid + H(+). The catalysed reaction is 1-acyl-2-(9Z,12Z)-octadecadienoyl-sn-glycero-3-phosphocholine + H2O = a 1-acyl-sn-glycero-3-phosphocholine + (9Z,12Z)-octadecadienoate + H(+). It catalyses the reaction 1-acyl-2-(5Z,8Z,11Z,14Z-eicosatetraenoyl)-sn-glycero-3-phosphocholine + H2O = a 1-acyl-sn-glycero-3-phosphocholine + (5Z,8Z,11Z,14Z)-eicosatetraenoate + H(+). The enzyme catalyses 1-hexadecanoyl-2-(5Z,8Z,11Z,14Z-eicosatetraenoyl)-sn-glycero-3-phosphocholine + H2O = 1-hexadecanoyl-sn-glycero-3-phosphocholine + (5Z,8Z,11Z,14Z)-eicosatetraenoate + H(+). It carries out the reaction 1-octadecanoyl-2-(9Z-octadecenoyl)-sn-glycero-3-phosphocholine + H2O = 1-octadecanoyl-sn-glycero-3-phosphocholine + (9Z)-octadecenoate + H(+). The catalysed reaction is 1-hexadecanoyl-2-(9Z-octadecenoyl)-sn-glycero-3-phosphocholine + H2O = 1-hexadecanoyl-sn-glycero-3-phosphocholine + (9Z)-octadecenoate + H(+). It catalyses the reaction 1-hexadecanoyl-2-(9Z,12Z-octadecadienoyl)-sn-glycero-3-phosphocholine + H2O = (9Z,12Z)-octadecadienoate + 1-hexadecanoyl-sn-glycero-3-phosphocholine + H(+). The enzyme catalyses 1-acyl-2-(9Z,12Z)-octadecadienoyl-sn-glycero-3-phosphoethanolamine + H2O = a 1-acyl-sn-glycero-3-phosphoethanolamine + (9Z,12Z)-octadecadienoate + H(+). It carries out the reaction 1-acyl-2-(5Z,8Z,11Z,14Z)-eicosatetraenoyl-sn-glycero-3-phosphoethanolamine + H2O = a 1-acyl-sn-glycero-3-phosphoethanolamine + (5Z,8Z,11Z,14Z)-eicosatetraenoate + H(+). The catalysed reaction is 1-hexadecanoyl-2-(5Z,8Z,11Z,14Z-eicosatetraenoyl)-sn-glycero-3-phosphoethanolamine + H2O = 1-hexadecanoyl-sn-glycero-3-phosphoethanolamine + (5Z,8Z,11Z,14Z)-eicosatetraenoate + H(+). It catalyses the reaction 1-hexadecanoyl-2-(5Z,8Z,11Z,14Z-eicosatetraenoyl)-sn-glycero-3-phosphocholine + H2O = 2-(5Z,8Z,11Z,14Z)-eicosatetraenoyl-sn-glycero-3-phosphocholine + hexadecanoate + H(+). The enzyme catalyses 1-octadecanoyl-2-(9Z-octadecenoyl)-sn-glycero-3-phosphocholine + H2O = 2-(9Z-octadecenoyl)-sn-glycero-3-phosphocholine + octadecanoate + H(+). It carries out the reaction 1-hexadecanoyl-2-(4Z,7Z,10Z,13Z,16Z,19Z-docosahexaenoyl)-sn-glycero-3-phosphocholine + H2O = 2-(4Z,7Z,10Z,13Z,16Z,19Z-docosahexaenoyl)-sn-glycero-3-phosphocholine + hexadecanoate + H(+). The catalysed reaction is 1-O-(1Z)-hexadecenyl-2 (5Z,8Z,11Z,14Z)-eicosatetraenoyl-sn-glycero-3-phosphocholine + H2O = 1-(1Z-hexadecenyl)-sn-glycero-3-phosphocholine + (5Z,8Z,11Z,14Z)-eicosatetraenoate + H(+). It catalyses the reaction 1-O-(1Z-hexadecenyl)-2-(9Z-octadecenoyl)-sn-glycero-3-phosphocholine + H2O = 1-(1Z-hexadecenyl)-sn-glycero-3-phosphocholine + (9Z)-octadecenoate + H(+). The enzyme catalyses 1-hexadecanoyl-sn-glycero-3-phosphocholine + H2O = sn-glycerol 3-phosphocholine + hexadecanoate + H(+). It carries out the reaction 1',3'-bis-[1,2-di-(9Z,12Z-octadecadienoyl)-sn-glycero-3-phospho]-glycerol + H2O = 1'-[1,2-di-(9Z,12Z-octadecadienoyl)-sn-glycero-3-phospho]-3'-[1-(9Z,12Z-octadecadienoyl)-sn-glycero-3-phospho]-glycerol + (9Z,12Z)-octadecadienoate + H(+). The catalysed reaction is 1'-[1-acyl-2-(9-hydroxy-(10E,12Z)-octadecadienoyl)-sn-glycero-3-phospho]-3'-[1,2-diacyl-sn-glycero-3-phospho]-glycerol + H2O = 9-hydroxy-(10E,12Z)-octadecadienoate + 1'-[1,2-diacyl-sn-glycero-3-phospho],3'-[1-acyl-sn-glycero-3-phospho]-glycerol + H(+). Its pathway is phospholipid metabolism. Calcium-independent phospholipase. In terms of biological role, calcium-independent and membrane-bound phospholipase, that catalyzes the esterolytic cleavage of fatty acids from glycerophospholipids to yield free fatty acids and lysophospholipids, hence regulating membrane physical properties and the release of lipid second messengers and growth factors. Hydrolyzes phosphatidylethanolamine, phosphatidylcholine and probably phosphatidylinositol with a possible preference for the former. Has also a broad substrate specificity in terms of fatty acid moieties, hydrolyzing saturated and mono-unsaturated fatty acids at nearly equal rates from either the sn-1 or sn-2 position in diacyl phosphatidylcholine. However, has a weak activity toward polyunsaturated fatty acids at the sn-2 position, and thereby favors the production of 2-arachidonoyl lysophosphatidylcholine, a key branch point metabolite in eicosanoid signaling. On the other hand, can produce arachidonic acid from the sn-1 position of diacyl phospholipid and from the sn-2 position of arachidonate-containing plasmalogen substrates. Therefore, plays an important role in the mobilization of arachidonic acid in response to cellular stimuli and the generation of lipid second messengers. Can also hydrolyze lysophosphatidylcholine. In the mitochondrial compartment, catalyzes the hydrolysis and release of oxidized aliphatic chains from cardiolipin and integrates mitochondrial bioenergetics and signaling. It is essential for maintaining efficient bioenergetic mitochondrial function through tailoring mitochondrial membrane lipid metabolism and composition. The protein is Calcium-independent phospholipase A2-gamma of Rattus norvegicus (Rat).